Here is a 384-residue protein sequence, read N- to C-terminus: 23S rRNA (uracil(747)-C(5))-methyltransferase RlmC (384 aa).

Residues C7, C15, C18, and C94 each coordinate [4Fe-4S] cluster. Q219, F248, E269, and N316 together coordinate S-adenosyl-L-methionine. The Nucleophile role is filled by C343.

It belongs to the class I-like SAM-binding methyltransferase superfamily. RNA M5U methyltransferase family. RlmC subfamily.

It carries out the reaction uridine(747) in 23S rRNA + S-adenosyl-L-methionine = 5-methyluridine(747) in 23S rRNA + S-adenosyl-L-homocysteine + H(+). Its function is as follows. Catalyzes the formation of 5-methyl-uridine at position 747 (m5U747) in 23S rRNA. The polypeptide is 23S rRNA (uracil(747)-C(5))-methyltransferase RlmC (Shewanella sp. (strain MR-7)).